A 1024-amino-acid chain; its full sequence is Error-prone DNA polymerase (1024 aa).

The protein belongs to the DNA polymerase type-C family. DnaE2 subfamily.

It is found in the cytoplasm. It catalyses the reaction DNA(n) + a 2'-deoxyribonucleoside 5'-triphosphate = DNA(n+1) + diphosphate. Its function is as follows. DNA polymerase involved in damage-induced mutagenesis and translesion synthesis (TLS). It is not the major replicative DNA polymerase. This Pseudomonas paraeruginosa (strain DSM 24068 / PA7) (Pseudomonas aeruginosa (strain PA7)) protein is Error-prone DNA polymerase.